The chain runs to 415 residues: Arrestin domain-containing protein 4 (415 aa).

2 short sequence motifs (PPxY motif) span residues Pro347–Tyr350 and Pro392–Tyr395.

This sequence belongs to the arrestin family. Interacts with ADRB2. Interacts (via PPxY motifs) with ITCH, NEDD4L and WWP2. Interacts with AVPR2. Identified in a complex containing at least ARRDC4, AVPR2 and HGS. Interacts with SLC11A2; controls the incorporation of SLC11A2 into extracellular vesicles through an ubiquitination-dependent mechanism. Interacts with TRIM65.

The protein localises to the early endosome. It localises to the cell membrane. It is found in the cytoplasmic vesicle. In terms of biological role, functions as an adapter recruiting ubiquitin-protein ligases to their specific substrates. Plays a role in endocytosis of activated G protein-coupled receptors (GPCRs). Through an ubiquitination-dependent mechanism also plays a role in the incorporation of SLC11A2 into extracellular vesicles. May play a role in glucose uptake. Participates in innate immune response by promoting IFIH1/MDA5 activation through interaction with TRIM65. In Mus musculus (Mouse), this protein is Arrestin domain-containing protein 4.